Consider the following 124-residue polypeptide: Large ribosomal subunit protein bL12 (124 aa).

This sequence belongs to the bacterial ribosomal protein bL12 family. As to quaternary structure, homodimer. Part of the ribosomal stalk of the 50S ribosomal subunit. Forms a multimeric L10(L12)X complex, where L10 forms an elongated spine to which 2 to 4 L12 dimers bind in a sequential fashion. Binds GTP-bound translation factors.

In terms of biological role, forms part of the ribosomal stalk which helps the ribosome interact with GTP-bound translation factors. Is thus essential for accurate translation. This chain is Large ribosomal subunit protein bL12, found in Herminiimonas arsenicoxydans.